We begin with the raw amino-acid sequence, 341 residues long: L-threonine 3-dehydrogenase (341 aa).

Residue cysteine 38 participates in Zn(2+) binding. Residues threonine 40 and histidine 43 each act as charge relay system in the active site. 6 residues coordinate Zn(2+): histidine 63, glutamate 64, cysteine 93, cysteine 96, cysteine 99, and cysteine 107. NAD(+) is bound by residues isoleucine 175, aspartate 195, arginine 200, 262–264, and 286–287; these read LGI and IY.

The protein belongs to the zinc-containing alcohol dehydrogenase family. Homotetramer. The cofactor is Zn(2+).

It localises to the cytoplasm. The catalysed reaction is L-threonine + NAD(+) = (2S)-2-amino-3-oxobutanoate + NADH + H(+). It functions in the pathway amino-acid degradation; L-threonine degradation via oxydo-reductase pathway; glycine from L-threonine: step 1/2. Its function is as follows. Catalyzes the NAD(+)-dependent oxidation of L-threonine to 2-amino-3-ketobutyrate. The sequence is that of L-threonine 3-dehydrogenase from Yersinia pestis bv. Antiqua (strain Antiqua).